Reading from the N-terminus, the 305-residue chain is Aquaporin-1 (305 aa).

Residues 1-34 (MSSNDSNDTDKQHTRLDPTGVDDAYIPPEQPETK) form a disordered region. Topologically, residues 1–48 (MSSNDSNDTDKQHTRLDPTGVDDAYIPPEQPETKHHRFKISRDTLRDH) are cytoplasmic. A helical membrane pass occupies residues 49–69 (FIAAVGEFCGTFMFLWCAYVI). Over 70 to 91 (CNVANHDVALVAAPDGSHPGQL) the chain is Extracellular. The helical transmembrane segment at 92 to 112 (IMIAIGFGFSVMFSIWCFAGV) threads the bilayer. Residues 113 to 136 (SGGALNPAMSLSLCLARAVSPTRC) lie on the Cytoplasmic side of the membrane. The NPA 1 motif lies at 118–120 (NPA). Residues 137 to 157 (VVMWVSQIVAGMAAGGAASAM) form a helical membrane-spanning segment. The Extracellular segment spans residues 158–176 (TPGEVLFANSLGLGCSRTR). The helical transmembrane segment at 177 to 197 (GLFLEMFGTAILCLTVLMTAV) threads the bilayer. At 198–203 (EKRETN) the chain is on the cytoplasmic side. Residues 204–224 (FMAALPIGISLFIAHVALTAY) traverse the membrane as a helical segment. Residues 225–248 (TGTGVNPARSLGAAVAARYFPHYH) lie on the Extracellular side of the membrane. The NPA 2 signature appears at 230 to 232 (NPA). The helical transmembrane segment at 249–269 (WIYWIGTLLGSILAWSVWQLL) threads the bilayer. Topologically, residues 270–305 (QILDYTTYVTAEKAASTKEKAQKKGETSSSSAVAEV) are cytoplasmic. Residues 286-295 (TKEKAQKKGE) show a composition bias toward basic and acidic residues. Residues 286-305 (TKEKAQKKGETSSSSAVAEV) are disordered. Residues 296–305 (TSSSSAVAEV) show a composition bias toward polar residues.

The protein belongs to the MIP/aquaporin (TC 1.A.8) family.

The protein resides in the endoplasmic reticulum membrane. It localises to the cell membrane. Water channel required to facilitate the transport of water across membranes. Involved in sporulation, freeze tolerance and osmotolerance. Is non-functional in most laboratory strains. The sequence is that of Aquaporin-1 (AQY1) from Saccharomyces cerevisiae (strain ATCC 204508 / S288c) (Baker's yeast).